The chain runs to 269 residues: 3-deoxy-manno-octulosonate cytidylyltransferase (269 aa).

It belongs to the KdsB family.

The protein resides in the cytoplasm. It catalyses the reaction 3-deoxy-alpha-D-manno-oct-2-ulosonate + CTP = CMP-3-deoxy-beta-D-manno-octulosonate + diphosphate. Its pathway is nucleotide-sugar biosynthesis; CMP-3-deoxy-D-manno-octulosonate biosynthesis; CMP-3-deoxy-D-manno-octulosonate from 3-deoxy-D-manno-octulosonate and CTP: step 1/1. The protein operates within bacterial outer membrane biogenesis; lipopolysaccharide biosynthesis. In terms of biological role, activates KDO (a required 8-carbon sugar) for incorporation into bacterial lipopolysaccharide in Gram-negative bacteria. This Cupriavidus necator (strain ATCC 17699 / DSM 428 / KCTC 22496 / NCIMB 10442 / H16 / Stanier 337) (Ralstonia eutropha) protein is 3-deoxy-manno-octulosonate cytidylyltransferase.